Here is a 469-residue protein sequence, read N- to C-terminus: 6-phosphofructo-2-kinase/fructose-2,6-bisphosphatase 4 (469 aa).

The segment at 1 to 249 (MASPRELTQN…YYLMNIHVTP (249 aa)) is 6-phosphofructo-2-kinase. 46–54 (GLPARGKTY) contacts ATP. Residues Arg79 and Arg103 each contribute to the beta-D-fructose 6-phosphate site. Residue Asp129 is part of the active site. Beta-D-fructose 6-phosphate is bound by residues Thr131 and Arg137. Residue Cys159 is part of the active site. 168–173 (NIVQVK) contributes to the ATP binding site. 3 residues coordinate beta-D-fructose 6-phosphate: Lys173, Arg194, and Tyr198. The tract at residues 250-469 (RSIYLCRHGE…EALVTVPAHQ (220 aa)) is fructose-2,6-bisphosphatase. Beta-D-fructose 2,6-bisphosphate is bound at residue Arg256. The Tele-phosphohistidine intermediate role is filled by His257. Residues Asn263, Gly269, and Arg306 each contribute to the beta-D-fructose 2,6-bisphosphate site. Glu326 (proton donor/acceptor) is an active-site residue. Residues Tyr337, Arg351, Lys355, Tyr366, Gln392, and Arg396 each contribute to the beta-D-fructose 2,6-bisphosphate site. Position 348 to 351 (348 to 351 (FALR)) interacts with ATP. ATP-binding positions include 392–396 (QAVMR) and Tyr428. At Thr444 the chain carries Phosphothreonine; by PKC.

It in the C-terminal section; belongs to the phosphoglycerate mutase family. Homodimer.

It carries out the reaction beta-D-fructose 2,6-bisphosphate + H2O = beta-D-fructose 6-phosphate + phosphate. It catalyses the reaction beta-D-fructose 6-phosphate + ATP = beta-D-fructose 2,6-bisphosphate + ADP + H(+). The most important regulatory mechanism of these opposing activities is by phosphorylation and dephosphorylation of the enzyme. Its function is as follows. Synthesis and degradation of fructose 2,6-bisphosphate. The chain is 6-phosphofructo-2-kinase/fructose-2,6-bisphosphatase 4 (PFKFB4) from Homo sapiens (Human).